A 144-amino-acid chain; its full sequence is Large ribosomal subunit protein uL15 (144 aa).

The disordered stretch occupies residues 1–49 (MKLNTLSPAAGAKSAAKRVGRGIGSGLGKTAGRGHKGQKSRSGGGVRVG). Residues 21–31 (RGIGSGLGKTA) are compositionally biased toward gly residues.

This sequence belongs to the universal ribosomal protein uL15 family. Part of the 50S ribosomal subunit.

Binds to the 23S rRNA. The protein is Large ribosomal subunit protein uL15 of Shewanella loihica (strain ATCC BAA-1088 / PV-4).